We begin with the raw amino-acid sequence, 582 residues long: 2-succinyl-5-enolpyruvyl-6-hydroxy-3-cyclohexene-1-carboxylate synthase (582 aa).

The protein belongs to the TPP enzyme family. MenD subfamily. As to quaternary structure, homodimer. Mg(2+) is required as a cofactor. Requires Mn(2+) as cofactor. The cofactor is thiamine diphosphate.

The enzyme catalyses isochorismate + 2-oxoglutarate + H(+) = 5-enolpyruvoyl-6-hydroxy-2-succinyl-cyclohex-3-ene-1-carboxylate + CO2. Its pathway is quinol/quinone metabolism; 1,4-dihydroxy-2-naphthoate biosynthesis; 1,4-dihydroxy-2-naphthoate from chorismate: step 2/7. It participates in cofactor biosynthesis; phylloquinone biosynthesis. Catalyzes the thiamine diphosphate-dependent decarboxylation of 2-oxoglutarate and the subsequent addition of the resulting succinic semialdehyde-thiamine pyrophosphate anion to isochorismate to yield 2-succinyl-5-enolpyruvyl-6-hydroxy-3-cyclohexene-1-carboxylate (SEPHCHC). In Prochlorococcus marinus (strain MIT 9313), this protein is 2-succinyl-5-enolpyruvyl-6-hydroxy-3-cyclohexene-1-carboxylate synthase.